A 722-amino-acid chain; its full sequence is Dipeptidyl aminopeptidase BII (722 aa).

A signal peptide spans Met1–Ala24. Cystine bridges form between Cys70–Cys87 and Cys166–Cys174. Catalysis depends on His86, which acts as the Charge relay system. Asn215–Trp216 serves as a coordination point for substrate. Asp224 acts as the Charge relay system in catalysis. Residues Asn330, Gly655–Ser657, and Phe673–Asp674 each bind substrate. The active-site Charge relay system is Ser657.

This sequence belongs to the peptidase S46 family. In terms of assembly, homodimer.

With respect to regulation, completely inhibited by the serine protease inhibitor diisopropyl fluorophosphate (DFP) and potently inhibited by 0.5 mM ZnCl(2), 10 mM o-phenanthlorine, phenylmethanesulfonyl fluoride (PMSF) and N-tosyl-L-phenyl-alanyl chloromethyl ketone (TPCK), but not by N-tosyl-L-lysyl chloromethyl ketone (TLCK). Activity is not affected significantly by protease inhibitors, such as chymostatin, leupeptin, N-ethylmaleimide (NEM), iodoacetate (IAA), L-trans-epoxysuccinyl-leucylamido(4-guanido)butane (E64) and pepstatin A or by CoCl(2), CaCl(2) and EDTA. Exopeptidase that catalyzes the removal of dipeptide units (NH2-P2-P1-) from the free amino termini of oligopeptides and small proteins. Peptide digestion is sequential and substrate recognition is non-specific, with the exception that Pro is not suitable as a P1 residue. Removes many residues of bioactive oligopeptides such as angiotensin I and neuromedin N and also cleaves oxidized insulin B chain. Able to hydrolyze an X-Pro bond, an imido bond. No endopeptidase activity. May play a physiological role in feeding. This Pseudoxanthomonas mexicana protein is Dipeptidyl aminopeptidase BII.